The chain runs to 130 residues: Small ribosomal subunit protein uS11 (130 aa).

Belongs to the universal ribosomal protein uS11 family. In terms of assembly, part of the 30S ribosomal subunit. Interacts with proteins S7 and S18. Binds to IF-3.

Functionally, located on the platform of the 30S subunit, it bridges several disparate RNA helices of the 16S rRNA. Forms part of the Shine-Dalgarno cleft in the 70S ribosome. The protein is Small ribosomal subunit protein uS11 of Thermoanaerobacter sp. (strain X514).